The following is a 39-amino-acid chain: U-limacoditoxin(13)-As54 (39 aa).

An N-terminal signal peptide occupies residues 1 to 23 (MSKYIVLLVVSAIALLQFSMIEC). Phenylalanine amide is present on Phe37.

Belongs to the FARP (FMRFamide related peptide) family. Expressed by the venom secretory cell of the spine. The spine is a cuticular structure containing a single large nucleated venom-secreting cell at its base. It is an independent unit capable of producing, storing and injecting venom. On the back of A.stimulea caterpillars, spines are grouped together by 50 to 100 to form scoli, of which there are eight.

It is found in the secreted. Functionally, strongly activates (at 30 uM) the human neuropeptide FF receptor 1 (NPFF1R), a G-protein coupled receptor, with an effect that is equipotent to the endogenous RFRP-1 ligand in activating NPFFR1. Is toxic when injected into Drosophila melanogaster. Also shows a moderate anthelmintic activity against the parasitic nematode H.contortus (drug susceptible Kirby isolate) (IC(50)=20.1 uM). This Acharia stimulea (Saddleback caterpillar moth) protein is U-limacoditoxin(13)-As54.